Reading from the N-terminus, the 460-residue chain is Mercuric reductase (460 aa).

The HMA domain occupies 1-65 (MTHLKITGMT…AVAGLGYKAM (65 aa)). 2 residues coordinate a metal cation: C11 and C14. A110, G130, and T135 together coordinate FAD. C136 and C141 are joined by a disulfide. K145 and A211 together coordinate FAD. C457 and C458 together coordinate Hg(2+).

The protein belongs to the class-I pyridine nucleotide-disulfide oxidoreductase family. In terms of assembly, homodimer. FAD serves as cofactor.

The enzyme catalyses Hg + NADP(+) + H(+) = Hg(2+) + NADPH. Functionally, resistance to Hg(2+) in bacteria appears to be governed by a specialized system which includes mercuric reductase. MerA protein is responsible for volatilizing mercury as Hg(0). This is Mercuric reductase (merA) from Serratia marcescens.